We begin with the raw amino-acid sequence, 145 residues long: MASFATIAAVQPSAAVKGLGGSSLAGAKLFIKPSRQSFKTKSTRAGAVVAKYGDKSVYFDLEDLGNTTGQWDVYGSDAPSPYNPLQSKFFETFAAPFTKRGLLLKFLILGGGSLLTYVSANSTGDVLPIKRGPQEPPKLGPRGKL.

The N-terminal 50 residues, 1 to 50 (MASFATIAAVQPSAAVKGLGGSSLAGAKLFIKPSRQSFKTKSTRAGAVVA), are a transit peptide targeting the chloroplast. Residues 102-118 (LLLKFLILGGGSLLTYV) form a helical membrane-spanning segment. The interval 126 to 145 (VLPIKRGPQEPPKLGPRGKL) is disordered.

The protein belongs to the psaH family.

It is found in the plastid. The protein resides in the chloroplast thylakoid membrane. In terms of biological role, possible role could be the docking of the LHC I antenna complex to the core complex. The polypeptide is Photosystem I reaction center subunit VI-2, chloroplastic (PSAH2) (Arabidopsis thaliana (Mouse-ear cress)).